Consider the following 720-residue polypeptide: Polyribonucleotide nucleotidyltransferase (720 aa).

Mg(2+) contacts are provided by aspartate 487 and aspartate 493. A KH domain is found at 554–613; sequence PRITTISIPKEKIREVIGTGGKVIREICEQTGAKIDIDDDGTIKVASVDADAAQRAIDWI. An S1 motif domain is found at 623-691; that stretch reads GVIYNGKVVK…DRGKVKLSMK (69 aa). Positions 695-720 are disordered; that stretch reads QTTGEDISAQLEAERAASKRERHHED. A compositionally biased stretch (basic and acidic residues) spans 706–720; the sequence is EAERAASKRERHHED.

This sequence belongs to the polyribonucleotide nucleotidyltransferase family. Requires Mg(2+) as cofactor.

The protein resides in the cytoplasm. It catalyses the reaction RNA(n+1) + phosphate = RNA(n) + a ribonucleoside 5'-diphosphate. Its function is as follows. Involved in mRNA degradation. Catalyzes the phosphorolysis of single-stranded polyribonucleotides processively in the 3'- to 5'-direction. This is Polyribonucleotide nucleotidyltransferase from Paramagnetospirillum magneticum (strain ATCC 700264 / AMB-1) (Magnetospirillum magneticum).